The sequence spans 178 residues: MNDREPNQKESKESVNDAVPRARKVDDQQLRVSKIRDGTVIDHLTAGEALNVLAILGIDGSSGEGVSVGMNVISDRLGRKDIVKVEDRELSQSEVDVLAVIAPEATINIIRDYAVVDKKRIERPTAVTGLLFCPNRNCITNANEPINTRFIVLDEGLQCDYCGSIVRESEVPTYLDVA.

Over residues 1-15 (MNDREPNQKESKESV) the composition is skewed to basic and acidic residues. The interval 1-23 (MNDREPNQKESKESVNDAVPRAR) is disordered. Zn(2+)-binding residues include Cys133, Cys138, Cys159, and Cys162.

It belongs to the PyrI family. In terms of assembly, contains catalytic and regulatory chains. Zn(2+) serves as cofactor.

Involved in allosteric regulation of aspartate carbamoyltransferase. In Haloquadratum walsbyi (strain DSM 16790 / HBSQ001), this protein is Aspartate carbamoyltransferase regulatory chain.